The sequence spans 142 residues: MTSILFEDTFEVKEIDPDGKKFDRVSRFVCYSENYEMDLQIDIATHIYPLGHERFKMVLASSLNLDGSSDNSGSYDTNKPSLADKYDYVMYGKIFKYQKENSSSKVSVFASFGGLLVLLQGDPRYLPGIELDARIYLLIKKA.

Positions 16–40 (DPDGKKFDRVSRFVCYSENYEMDLQ) are non-specific ssDNA binding.

It belongs to the eukaryotic RPB8 RNA polymerase subunit family. In terms of assembly, component of the RNA polymerase I (Pol I), RNA polymerase II (Pol II) and RNA polymerase III (Pol III) complexes consisting of at least 13, 12 and 17 subunits, respectively. Directly interacts with POLR2A.

The protein localises to the nucleus. Its subcellular location is the nucleolus. DNA-dependent RNA polymerase catalyzes the transcription of DNA into RNA using the four ribonucleoside triphosphates as substrates. Common component of RNA polymerases I, II and III which synthesize ribosomal RNA precursors, mRNA precursors and many functional non-coding RNAs, and small RNAs, such as 5S rRNA and tRNAs, respectively. The chain is DNA-directed RNA polymerases I, II, and III subunit rpabc3 (polr2h) from Dictyostelium discoideum (Social amoeba).